The sequence spans 954 residues: Isoleucine--tRNA ligase (954 aa).

The short motif at 58–68 (PYANGDIHIGH) is the 'HIGH' region element. Position 572 (glutamate 572) interacts with L-isoleucyl-5'-AMP. A 'KMSKS' region motif is present at residues 613 to 617 (KMSKS). ATP is bound at residue lysine 616. Positions 917, 920, 937, and 940 each coordinate Zn(2+).

It belongs to the class-I aminoacyl-tRNA synthetase family. IleS type 1 subfamily. In terms of assembly, monomer. The cofactor is Zn(2+).

It is found in the cytoplasm. The catalysed reaction is tRNA(Ile) + L-isoleucine + ATP = L-isoleucyl-tRNA(Ile) + AMP + diphosphate. Its function is as follows. Catalyzes the attachment of isoleucine to tRNA(Ile). As IleRS can inadvertently accommodate and process structurally similar amino acids such as valine, to avoid such errors it has two additional distinct tRNA(Ile)-dependent editing activities. One activity is designated as 'pretransfer' editing and involves the hydrolysis of activated Val-AMP. The other activity is designated 'posttransfer' editing and involves deacylation of mischarged Val-tRNA(Ile). The protein is Isoleucine--tRNA ligase of Photobacterium profundum (strain SS9).